The chain runs to 220 residues: Sec-independent protein translocase protein TatB (220 aa).

A helical membrane pass occupies residues 1-21 (MFDIGFSELLLVLVIGLVVLG). The disordered stretch occupies residues 190 to 220 (VTKQQIDTIDSHGTDLSSAGPSRIHQPGGDQ).

It belongs to the TatB family. As to quaternary structure, the Tat system comprises two distinct complexes: a TatABC complex, containing multiple copies of TatA, TatB and TatC subunits, and a separate TatA complex, containing only TatA subunits. Substrates initially bind to the TatABC complex, which probably triggers association of the separate TatA complex to form the active translocon.

The protein localises to the cell inner membrane. In terms of biological role, part of the twin-arginine translocation (Tat) system that transports large folded proteins containing a characteristic twin-arginine motif in their signal peptide across membranes. Together with TatC, TatB is part of a receptor directly interacting with Tat signal peptides. TatB may form an oligomeric binding site that transiently accommodates folded Tat precursor proteins before their translocation. The sequence is that of Sec-independent protein translocase protein TatB from Yersinia pseudotuberculosis serotype I (strain IP32953).